A 533-amino-acid chain; its full sequence is (E)-beta-farnesene synthase (533 aa).

Residues aspartate 286 and aspartate 290 each coordinate Mg(2+). Aspartate 286, aspartate 290, arginine 427, and asparagine 430 together coordinate substrate. Residues 286 to 290 carry the DDXXD motif motif; sequence DDMMD. Positions 430 and 438 each coordinate Mg(2+).

Belongs to the terpene synthase family. In terms of assembly, monomer. The cofactor is Mg(2+). It depends on Mn(2+) as a cofactor.

It localises to the cytoplasm. It catalyses the reaction (2E,6E)-farnesyl diphosphate = (E)-beta-farnesene + diphosphate. It carries out the reaction (2E,6E)-farnesyl diphosphate = alpha-copaene + diphosphate. The catalysed reaction is (2E,6E)-farnesyl diphosphate = (1S,5S,6R)-alpha-bergamotene + diphosphate. The enzyme catalyses (2E,6E)-farnesyl diphosphate = (-)-(E)-beta-caryophyllene + diphosphate. It catalyses the reaction (2E,6E)-farnesyl diphosphate = delta-cadinene + diphosphate. It carries out the reaction (2E,6E)-farnesyl diphosphate = (+)-germacrene D + diphosphate. The catalysed reaction is (2E,6E)-farnesyl diphosphate = alpha-zingiberene + diphosphate. The enzyme catalyses (2E,6E)-farnesyl diphosphate = alpha-muurolene + diphosphate. It catalyses the reaction (2E,6E)-farnesyl diphosphate = (S)-beta-bisabolene + diphosphate. It carries out the reaction (2E,6E)-farnesyl diphosphate = beta-sesquiphellandrene + diphosphate. The catalysed reaction is (2E,6E)-farnesyl diphosphate = sesquisabinene A + diphosphate. Its pathway is secondary metabolite biosynthesis; terpenoid biosynthesis. In terms of biological role, sesquiterpene cyclase catalyzing mainly the production of beta-farnesene and alpha-bergamotene in equal amounts from farnesyl diphosphate. Also mediates the biosynthesis of minor sesquiterpene hydrocarbons including alpha-muurolene, beta-bisabolene, zingiberene, sesquiphellandrene, sesquisabinene A, germacrene D, delta-cadinene, alpha-copaene and (E)-beta-caryophyllene. Involved in indirect defense by producing volatile signals attracting natural enemies of herbivores. In Zea mays (Maize), this protein is (E)-beta-farnesene synthase.